The sequence spans 427 residues: Trigger factor (427 aa).

Positions Gly163–Pro248 constitute a PPIase FKBP-type domain.

Belongs to the FKBP-type PPIase family. Tig subfamily.

Its subcellular location is the cytoplasm. It carries out the reaction [protein]-peptidylproline (omega=180) = [protein]-peptidylproline (omega=0). Functionally, involved in protein export. Acts as a chaperone by maintaining the newly synthesized protein in an open conformation. Functions as a peptidyl-prolyl cis-trans isomerase. The polypeptide is Trigger factor (Streptococcus pneumoniae (strain Taiwan19F-14)).